A 120-amino-acid chain; its full sequence is Dense granule protein 5 (120 aa).

A signal peptide spans 1–25 (MASVKRVVVAVMIVNVLALIFVGVA). Residues 27–59 (STRDVGSGGDDSEGARGREQQQVQQHEQNEDRS) are disordered. Residues 76–93 (AVGLAAAVVAVVSLLRLL) form a helical membrane-spanning segment. Residues 100–109 (AIQEESKESA) are compositionally biased toward basic and acidic residues. The interval 100-120 (AIQEESKESATAEEEEVAEEE) is disordered. Positions 110 to 120 (TAEEEEVAEEE) are enriched in acidic residues.

The protein localises to the secreted. Its subcellular location is the parasitophorous vacuole lumen. It localises to the parasitophorous vacuole membrane. It is found in the cytoplasmic vesicle. The protein resides in the secretory vesicle. In terms of biological role, plays a role in the function of the cyst and parasitophorous vacuole membranes and therefore in host-parasite interactions. The chain is Dense granule protein 5 (GRA5) from Toxoplasma gondii.